The primary structure comprises 1025 residues: Multidrug resistance protein MdtC (1025 aa).

12 helical membrane passes run 3–23 (FFALFIYRPVATILLSVAITL), 333–353 (EVEQTLIISVALVILVVFLFL), 360–380 (IIPAVAVPVSLIGTFAAMYLC), 387–407 (LSLMALTIATGFVVDDAIVVL), 431–451 (VGFTVLSMSLSLVAVFLPLLL), 463–483 (FAVTLSVAIGISLLVSLTLTP), 528–548 (LVGVVLLGTIALNIWLYISIP), 853–873 (VILIIAAIATVYIVLGILYES), 875–895 (VHPLTILSTLPSAGVGALLAL), 897–917 (LFNAPFSLIALIGIMLLIGIV), 953–973 (PIMMTTLAALFGALPLVLSGG), and 984–1004 (ITIVGGLVMSQLLTLYTTPVV).

It belongs to the resistance-nodulation-cell division (RND) (TC 2.A.6) family. MdtC subfamily. As to quaternary structure, part of a tripartite efflux system composed of MdtA, MdtB and MdtC. MdtC forms a heteromultimer with MdtB.

It is found in the cell inner membrane. The MdtABC tripartite complex confers resistance against novobiocin and deoxycholate. This chain is Multidrug resistance protein MdtC, found in Escherichia coli O7:K1 (strain IAI39 / ExPEC).